A 432-amino-acid polypeptide reads, in one-letter code: Thiol-specific monooxygenase (432 aa).

FAD is bound by residues Gly13–Gly17 and Val46–Trp47. Thr65–Asn66 serves as a coordination point for NADP(+). Glu117–Val118 is an FAD binding site. Ser199–Asp202 is an NADP(+) binding site.

It belongs to the FMO family. Monomer. FAD is required as a cofactor.

Its function is as follows. Flavin-dependent oxidation of thiol-containing compounds. Probably required for the correct folding of disulfide-bonded proteins. This Saccharomyces cerevisiae (strain ATCC 204508 / S288c) (Baker's yeast) protein is Thiol-specific monooxygenase (FMO1).